A 280-amino-acid chain; its full sequence is Ribosomal RNA small subunit methyltransferase A (280 aa).

Asparagine 27, leucine 29, glycine 54, glutamate 76, aspartate 102, and asparagine 122 together coordinate S-adenosyl-L-methionine.

The protein belongs to the class I-like SAM-binding methyltransferase superfamily. rRNA adenine N(6)-methyltransferase family. RsmA subfamily.

It is found in the cytoplasm. It carries out the reaction adenosine(1518)/adenosine(1519) in 16S rRNA + 4 S-adenosyl-L-methionine = N(6)-dimethyladenosine(1518)/N(6)-dimethyladenosine(1519) in 16S rRNA + 4 S-adenosyl-L-homocysteine + 4 H(+). Specifically dimethylates two adjacent adenosines (A1518 and A1519) in the loop of a conserved hairpin near the 3'-end of 16S rRNA in the 30S particle. May play a critical role in biogenesis of 30S subunits. This chain is Ribosomal RNA small subunit methyltransferase A, found in Oleidesulfovibrio alaskensis (strain ATCC BAA-1058 / DSM 17464 / G20) (Desulfovibrio alaskensis).